The chain runs to 216 residues: Uracil-DNA glycosylase (216 aa).

Aspartate 59 functions as the Proton acceptor in the catalytic mechanism.

This sequence belongs to the uracil-DNA glycosylase (UDG) superfamily. UNG family.

The protein resides in the cytoplasm. The catalysed reaction is Hydrolyzes single-stranded DNA or mismatched double-stranded DNA and polynucleotides, releasing free uracil.. Excises uracil residues from the DNA which can arise as a result of misincorporation of dUMP residues by DNA polymerase or due to deamination of cytosine. The chain is Uracil-DNA glycosylase from Idiomarina loihiensis (strain ATCC BAA-735 / DSM 15497 / L2-TR).